The sequence spans 350 residues: Induced myeloid leukemia cell differentiation protein Mcl-1 homolog (350 aa).

Residues Lys5 and Lys40 each participate in a glycyl lysine isopeptide (Lys-Gly) (interchain with G-Cter in ubiquitin) cross-link. The segment at 104 to 175 (CASPPEEMEG…PAEEEEDELF (72 aa)) is PEST-like. Residue Ser121 is modified to Phosphoserine. A Glycyl lysine isopeptide (Lys-Gly) (interchain with G-Cter in ubiquitin) cross-link involves residue Lys136. The tract at residues 148–170 (GEASSGPGTDGSLPSTPPPAEEE) is disordered. Ser159 is subject to Phosphoserine; by GSK3-alpha and GSK3-beta. Ser162 bears the Phosphoserine mark. At Thr163 the chain carries Phosphothreonine; by MAPK. Glycyl lysine isopeptide (Lys-Gly) (interchain with G-Cter in ubiquitin) cross-links involve residues Lys194 and Lys197. The short motif at 209 to 223 (ALETLRRVGDGVQRN) is the BH3 element. The BH1 motif lies at 252 to 272 (HVFSDGVTNWGRIVTLISFGA). The short motif at 304–319 (DWLVKQRGWDGFVEFF) is the BH2 element. A helical transmembrane segment spans residues 328–348 (IRNVLLAFAGVAGVGAGLAYL).

It belongs to the Bcl-2 family. Interacts with HIF3A (via C-terminus domain). Interacts with BOK, BIK, BAX, BAK1, and TPT1. Interacts with unphosphorylated BAD. Interacts with BMF, BBC3 and PMAIP1. Interacts with BOP. Interacts with BCL2L11; may sequester BCL2L11 to prevent its pro-apoptotic activity. Interacts with GIMAP5 and HSPA8/HSC70; the interaction between HSPA8 and MCL1 is impaired in the absence of GIMAP5. Cleaved by CASP3 during apoptosis, yielding a pro-apoptotic C-terminal fragment. Post-translationally, rapidly degraded in the absence of phosphorylation in the PEST region. In terms of processing, phosphorylated on Ser-159, by GSK3, in response to IL3/interleukin-3 withdrawal. Phosphorylation at Ser-159 induces ubiquitination and proteasomal degradation, abrogating the anti-apoptotic activity. Treatment with taxol or okadaic acid induces phosphorylation on additional sites. Ubiquitinated. Ubiquitination is induced by phosphorylation at Ser-159. Deubiquitinated by USP20; leading to increased stability.

It is found in the membrane. It localises to the cytoplasm. The protein resides in the mitochondrion. The protein localises to the nucleus. Its subcellular location is the nucleoplasm. Functionally, involved in the regulation of apoptosis versus cell survival, and in the maintenance of viability but not of proliferation. Mediates its effects by interactions with a number of other regulators of apoptosis. The polypeptide is Induced myeloid leukemia cell differentiation protein Mcl-1 homolog (MCL1) (Felis catus (Cat)).